Consider the following 1391-residue polypeptide: DNA-directed RNA polymerase subunit beta'' (1391 aa).

Positions 224, 295, 302, and 305 each coordinate Zn(2+).

It belongs to the RNA polymerase beta' chain family. RpoC2 subfamily. In terms of assembly, in plastids the minimal PEP RNA polymerase catalytic core is composed of four subunits: alpha, beta, beta', and beta''. When a (nuclear-encoded) sigma factor is associated with the core the holoenzyme is formed, which can initiate transcription. It depends on Zn(2+) as a cofactor.

The protein resides in the plastid. It is found in the chloroplast. It carries out the reaction RNA(n) + a ribonucleoside 5'-triphosphate = RNA(n+1) + diphosphate. DNA-dependent RNA polymerase catalyzes the transcription of DNA into RNA using the four ribonucleoside triphosphates as substrates. The chain is DNA-directed RNA polymerase subunit beta'' from Buxus microphylla (Littleleaf boxwood).